The chain runs to 86 residues: Progonadoliberin-2 (86 aa).

Residues 1 to 24 (MVSVCRLLLVAALLLCLQAQLSFS) form the signal peptide. A Pyrrolidone carboxylic acid modification is found at glutamine 25. Glycine 34 bears the Glycine amide mark.

This sequence belongs to the GnRH family.

The protein localises to the secreted. Its function is as follows. Stimulates the secretion of gonadotropins. The sequence is that of Progonadoliberin-2 (gnrh2) from Clarias gariepinus (North African catfish).